A 438-amino-acid polypeptide reads, in one-letter code: Glutamyl-tRNA(Gln) amidotransferase subunit D (438 aa).

The Asparaginase/glutaminase domain occupies 92–422 (PEVTIIGTGG…EEVRKMMLTN (331 aa)). Active-site residues include Thr-102, Thr-178, Asp-179, and Lys-256.

The protein belongs to the asparaginase 1 family. GatD subfamily. Heterodimer of GatD and GatE.

The enzyme catalyses L-glutamyl-tRNA(Gln) + L-glutamine + ATP + H2O = L-glutaminyl-tRNA(Gln) + L-glutamate + ADP + phosphate + H(+). Functionally, allows the formation of correctly charged Gln-tRNA(Gln) through the transamidation of misacylated Glu-tRNA(Gln) in organisms which lack glutaminyl-tRNA synthetase. The reaction takes place in the presence of glutamine and ATP through an activated gamma-phospho-Glu-tRNA(Gln). The GatDE system is specific for glutamate and does not act on aspartate. This is Glutamyl-tRNA(Gln) amidotransferase subunit D from Pyrococcus abyssi (strain GE5 / Orsay).